The sequence spans 1097 residues: MALHLHRAERTDLLADGLGALLADPQPDPFAQELVLVAARGVERWLSQRLSLVLGCGPGRADGVCAGIAFRNPQSLIAEITGTLDDDPWSPEALAWPLLAVIDASLDEPWCRTLASHLGHFATTDAEAELRRGRRYSVARRLAGLFASYARQRPGLLAAWLDGDLGELPGDLAWQPPLWRALVTTVGADPPHVRHDKTIARLRDGPADLPARLSLFGHTRLACTDVQLLDALAVHHDLHLWLPHPSDELWRALAGFQGADGLLPRRQDTSRRAAQHPLLETLGRDVRELQRALPAARATDEFLGATTKPDTLLGWLQADIAGNAPRPAGRSLSDADRSVQVHACHGPARQIDVLREVLLGLLEDDPTLQPRDIVVMCPDIDTYAPLIVAGFGLGEVAGDCHPAHRLRVRLADRALTQTNPLLSVAAELLTIAETRATASQLLNLAQAAPVRAKFGFADDDLDTITTWVRESNIRWGFDPTHRRRYGLDTVVHNTWRFGLDRILTGVAMSEDSQAWLDTALPLDDVGSNRVELAGRLAEFVERLHHVVGGLSGARPLVAWLDALATGIDLLTACNDGWQRAQVQREFADVLARAGSRAAPLLRLPDVRALLDAQLAGRPTRANFRTGTLTVCTMVPMRSVPHRVVCLVGLDDGVFPRLSHPDGDDVLAREPMTGERDIRSEDRQLLLDAIGAATQTLVITYTGADERTGQPRPPAVPLAELLDALDQTTSAPVRERILVTHPLQPFDRKNVTPGALLGAKPFTFDPAALAAAQAAAGKRCPPTAFISGRLPAPPAADVTLADLLDFFKDPVKGFFRALDYTLPWDVDTVEDSIPVQVDALAEWTVGERMLRDMLRGLHPDDAAHSEWRRGTLPPGRLGVRRAKEIRNRARDLAAAALAHRDGHGQAHDVDVDLGDGRRLSGTVTPVFGGRTVSVTYSKLAPKHVLPAWIGLVTLAAQEPGREWSALCIGRSKTRNHIARRLFVPPPDPVAVLRELVLLYDAGRREPLPLPLKTSCAWAQARRDGQDPYPPARECWQTNRFRPGDDDAPAHVRAWGPRAPFEVLLGKPRAGEEVAGEETRLGALAARLWLPLLAAEGSV.

It belongs to the RecC family. Heterotrimer of RecB, RecC and RecD. All subunits contribute to DNA-binding.

A helicase/nuclease that prepares dsDNA breaks (DSB) for recombinational DNA repair. Binds to DSBs and unwinds DNA via a highly rapid and processive ATP-dependent bidirectional helicase activity. Holoenzyme degrades any linearized DNA that is unable to undergo homologous recombination. In the holoenzyme this subunit recognizes the wild-type Chi sequence, and when added to isolated RecB increases its ATP-dependent helicase processivity. Unlike the case in E.coli, suppresses RecA-dependent homologous recombination, is instead required for single-strand annealing pathway repair of DSB. This chain is RecBCD enzyme subunit RecC, found in Mycobacterium tuberculosis (strain ATCC 25618 / H37Rv).